Here is a 94-residue protein sequence, read N- to C-terminus: Large ribosomal subunit protein bL27 (94 aa).

Residues 1-9 constitute a propeptide that is removed on maturation; the sequence is MLRLDLQFF.

Belongs to the bacterial ribosomal protein bL27 family. In terms of processing, the N-terminus is cleaved by ribosomal processing cysteine protease Prp.

The chain is Large ribosomal subunit protein bL27 from Bacillus pumilus (strain SAFR-032).